A 747-amino-acid polypeptide reads, in one-letter code: Myotubularin-related protein 12 (747 aa).

Residues 1–14 are compositionally biased toward gly residues; that stretch reads MLGKGVVGGGGGTK. The interval 1–21 is disordered; it reads MLGKGVVGGGGGTKGPKPSFV. The region spanning 205–643 is the Myotubularin phosphatase domain; that stretch reads FDTLKDWCWE…PEIKVWAQRY (439 aa). Positions 449–558 are interaction with MTM1; that stretch reads VPVFLLFLDC…KGQRKGMRFK (110 aa). Residues Ser564, Ser601, and Ser716 each carry the phosphoserine modification.

Belongs to the protein-tyrosine phosphatase family. Non-receptor class myotubularin subfamily. As to quaternary structure, heterodimer with lipid phosphatase MTM1. Heterodimer with lipid phosphatase MTMR2.

The protein resides in the cytoplasm. It is found in the sarcoplasmic reticulum. It localises to the myofibril. Its subcellular location is the sarcomere. In terms of biological role, acts as an adapter for the myotubularin-related phosphatases. Regulates phosphatase MTM1 protein stability and possibly its intracellular location. By stabilizing MTM1 protein levels, required for skeletal muscle maintenance but not for myogenesis. This is Myotubularin-related protein 12 (MTMR12) from Pongo abelii (Sumatran orangutan).